We begin with the raw amino-acid sequence, 154 residues long: CASP-like protein 5B2 (154 aa).

Topologically, residues 1–17 (MAGLAGRPGSWGGLVLR) are cytoplasmic. A helical transmembrane segment spans residues 18 to 38 (VGQALFAAACIGVMGSSLGFA). The Extracellular segment spans residues 39 to 42 (SYTA). The helical transmembrane segment at 43–63 (FCYLIASMGLQMLWSFGLACL) threads the bilayer. At 64–87 (DGYAIRANKDLTSPILLSLFVVGD) the chain is on the cytoplasmic side. The chain crosses the membrane as a helical span at residues 88–107 (WVTAILSFAASSSAAGVVIL). Over 108–130 (FQKDVLFCRRYPQLPCGKYELAT) the chain is Extracellular. A helical membrane pass occupies residues 131–151 (AFAFLSWALSATSALIMFWLL). At 152-154 (AAF) the chain is on the cytoplasmic side.

This sequence belongs to the Casparian strip membrane proteins (CASP) family. In terms of assembly, homodimer and heterodimers.

Its subcellular location is the cell membrane. The protein is CASP-like protein 5B2 of Zea mays (Maize).